The following is a 224-amino-acid chain: Ribose-5-phosphate isomerase A (224 aa).

Residues Thr26–Thr29, Asp82–Asp85, and Lys95–Gly98 each bind substrate. The active-site Proton acceptor is the Glu104. Lys122 serves as a coordination point for substrate.

It belongs to the ribose 5-phosphate isomerase family. Homodimer.

The catalysed reaction is aldehydo-D-ribose 5-phosphate = D-ribulose 5-phosphate. It functions in the pathway carbohydrate degradation; pentose phosphate pathway; D-ribose 5-phosphate from D-ribulose 5-phosphate (non-oxidative stage): step 1/1. Catalyzes the reversible conversion of ribose-5-phosphate to ribulose 5-phosphate. The protein is Ribose-5-phosphate isomerase A of Lactococcus lactis subsp. cremoris (strain MG1363).